A 380-amino-acid polypeptide reads, in one-letter code: M-protease (380 aa).

A signal peptide spans 1–27 (MKKPLGKIVASTALLISVAFSSSIASA). Residues 28-111 (AEEAKEKYLI…IEEDAEVTTM (84 aa)) constitute a propeptide that is removed on maturation. The 78-residue stretch at 34-111 (KYLIGFNEQE…IEEDAEVTTM (78 aa)) folds into the Inhibitor I9 domain. Residue Gln113 coordinates Ca(2+). The Peptidase S8 domain occupies 116–379 (PWGISRVQAP…SGLVNAEAAT (264 aa)). Residue Asp143 is the Charge relay system of the active site. Residue Asp151 participates in Ca(2+) binding. The active-site Charge relay system is His173. Ca(2+) contacts are provided by Leu184, Asn186, Ile188, Val190, Ala274, Tyr276, Ala279, and Asp302. Catalysis depends on Ser326, which acts as the Charge relay system.

The protein belongs to the peptidase S8 family. As to quaternary structure, monomer. Ca(2+) is required as a cofactor.

It is found in the secreted. With respect to regulation, activity is inhibited by phenylmethylsulfonyl fluoride and chymostatin. In terms of biological role, alkaline serine protease that cleaves various substrates, including N-succinyl-Ala-Ala-Pro-Phe-pNA, N-succinyl-Ala-Ala-Pro-MetpNA, oxidized insulin B chain, casein, hemoglobin and scleroproteins, such as keratin, alpha-keratin and elastin. The chain is M-protease (aprE) from Shouchella clausii (strain KSM-K16) (Alkalihalobacillus clausii).